Here is a 150-residue protein sequence, read N- to C-terminus: Large ribosomal subunit protein bL9 (150 aa).

The protein belongs to the bacterial ribosomal protein bL9 family.

Binds to the 23S rRNA. The protein is Large ribosomal subunit protein bL9 of Albidiferax ferrireducens (strain ATCC BAA-621 / DSM 15236 / T118) (Rhodoferax ferrireducens).